The primary structure comprises 156 residues: Succinate dehydrogenase [ubiquinone] cytochrome b small subunit 1, mitochondrial (156 aa).

The transit peptide at 1-25 (MLSAVRRAIPLSARILRTSLIQRCA) directs the protein to the mitochondrion. Over 26 to 59 (GATSAAVTGAAPPQFDPIAAEKGFKPLHSHGTLF) the chain is Mitochondrial matrix. Residues 60–78 (KIERYFAAAMVPLIPAAYF) traverse the membrane as a helical segment. Over 79–83 (IHGRE) the chain is Mitochondrial intermembrane. Residues 84-104 (MDLCLALALTLHVHWGVWGVV) form a helical membrane-spanning segment. His-95 is a binding site for heme b. Over 105 to 119 (NDYGRPFVLGDTLAA) the chain is Mitochondrial matrix. A rhodoquinol is bound at residue Tyr-107. The chain crosses the membrane as a helical span at residues 120 to 141 (AVRVGAYIFTACLLAGLLYFNE). Topologically, residues 142–156 (HDVGLTRAFEMVWEL) are mitochondrial intermembrane.

Belongs to the CybS family. As to quaternary structure, component of the mitochondrial electron transport chain complex II composed of four subunits: a flavoprotein (Fp), an iron-sulfur protein (Ip), and a large cytochrome b (CybL) subunit and a small cytochrome b (CybS) subunit. There are 2 developmental stage-specific forms of complex II which have the Ip and CybL subunits in common. Complex II from the free-living larvae (aerobic environment) acts as a succinate dehydrogenase and is composed of the common subunit Ip and CybL and the stage specific subunits FpL and CybSL. Complex II from parasitic larvae and adults (anaerobic environment) acts as a fumarate reductase and is composed of the common subunit Ip and CybL and the stage specific subunits FpA and CybSA. Heme b serves as cofactor. In terms of tissue distribution, expressed in adult muscles (at protein level).

The protein localises to the mitochondrion inner membrane. Membrane-bound small subunit (CybS) of the mitochondrial electron transport chain complex II, which together with the membrane-bound large subunit (CybL), anchor the catalytic subunits to the inner mitochondria membrane. During the parasitic larvae and adult stages, which occur in an anaerobic environment, complex II acts as a fumarate reductase by transferring electrons from rhodoquinol to fumarate. The sequence is that of Succinate dehydrogenase [ubiquinone] cytochrome b small subunit 1, mitochondrial from Ascaris suum (Pig roundworm).